Reading from the N-terminus, the 348-residue chain is Rhodopsin (348 aa).

Topologically, residues 1–33 (TEGPYFYVPMVNTTGIVRSPYEYPQYYLVNPAA) are extracellular. N-linked (GlcNAc...) asparagine glycosylation is present at Asn-12. Residues 34 to 58 (YAVLGAYMFFLIILGFPINFLTLYV) traverse the membrane as a helical segment. The Cytoplasmic portion of the chain corresponds to 59–70 (TLEHKKLRTPLN). The helical transmembrane segment at 71–93 (YILLNLAVADLFMVIGGFTTTMY) threads the bilayer. At 94 to 107 (SSMHGYFVLGRLGC) the chain is on the extracellular side. Cys-107 and Cys-184 are oxidised to a cystine. The chain crosses the membrane as a helical span at residues 108-130 (NLEGFSATLGGMISLWSLAVLAI). Residues 131–133 (ERW) carry the 'Ionic lock' involved in activated form stabilization motif. At 131 to 149 (ERWVVVCKPISNFRFGENH) the chain is on the cytoplasmic side. Residues 150-170 (AIMGVSLTWTMALACTVPPLV) form a helical membrane-spanning segment. The Extracellular segment spans residues 171–199 (GWSRYIPEGMQCSCGIDYYTRAEGFNNES). Asn-197 carries N-linked (GlcNAc...) asparagine glycosylation. Residues 200–221 (FVLYMFFCHFMVPLIIIFFCYG) traverse the membrane as a helical segment. Over 222-249 (RLLCAVKEAAAAQQESETTQRAEREVTR) the chain is Cytoplasmic. Residues 250-271 (MVILMVIGYLVCWLPYASVAWF) traverse the membrane as a helical segment. Residues 272–283 (IFTHQGSEFGPL) lie on the Extracellular side of the membrane. A helical transmembrane segment spans residues 284 to 305 (FMTIPAFFAKSSSIYNPVIYIC). Lys-293 bears the N6-(retinylidene)lysine mark. Over 306–348 (MNKQFRNCMITTLFCGKNPFEGEEEGASSTKTEASSASSVSPA) the chain is Cytoplasmic. Cys-320 carries S-palmitoyl cysteine lipidation. The disordered stretch occupies residues 327-348 (GEEEGASSTKTEASSASSVSPA). Low complexity predominate over residues 332–348 (ASSTKTEASSASSVSPA).

The protein belongs to the G-protein coupled receptor 1 family. Opsin subfamily. In terms of processing, phosphorylated on some or all of the serine and threonine residues present in the C-terminal region. Contains one covalently linked retinal chromophore.

The protein localises to the membrane. It is found in the cell projection. It localises to the cilium. The protein resides in the photoreceptor outer segment. Photoreceptor required for image-forming vision at low light intensity. While most salt water fish species use retinal as chromophore, most freshwater fish use 3-dehydroretinal, or a mixture of retinal and 3-dehydroretinal. Light-induced isomerization of 11-cis to all-trans retinal triggers a conformational change that activates signaling via G-proteins. Subsequent receptor phosphorylation mediates displacement of the bound G-protein alpha subunit by arrestin and terminates signaling. This is Rhodopsin (rho) from Neoniphon argenteus (Clearfin squirrelfish).